The primary structure comprises 366 residues: Isocitrate dehydrogenase [NAD] subunit alpha, mitochondrial (366 aa).

A mitochondrion-targeting transit peptide spans M1 to F27. K77 carries the N6-succinyllysine modification. T101 carries the phosphothreonine modification. 3 residues coordinate substrate: R115, R125, and R146. Residue K223 is modified to N6-acetyllysine. D233, D257, and D261 together coordinate Mg(2+). N6-acetyllysine; alternate is present on K343. Position 343 is an N6-succinyllysine; alternate (K343). K350 bears the N6-succinyllysine mark.

This sequence belongs to the isocitrate and isopropylmalate dehydrogenases family. In terms of assembly, heterooligomer of subunits alpha (IDH3A), beta (IDH3B), and gamma (IDH3G) in the apparent ratio of 2:1:1. The heterodimer containing one IDH3A and one IDH3B subunit and the heterodimer containing one IDH3A and one IDH3G subunit assemble into a heterotetramer (which contains two subunits of IDH3A, one of IDH3B and one of IDH3G) and further into the heterooctamer. It depends on Mg(2+) as a cofactor. Mn(2+) is required as a cofactor.

It is found in the mitochondrion. It carries out the reaction D-threo-isocitrate + NAD(+) = 2-oxoglutarate + CO2 + NADH. Its activity is regulated as follows. The heterotetramer and the heterodimer composed of IDH3A and IDH3G subunits can be allosterically activated by citrate (CIT) or/and ADP, and the two activators can act independently or synergistically. The heterodimer composed of IDH3A and IDH3B subunits cannot be allosterically regulated and the allosteric regulation of the heterotetramer is through the IDH3G subunit and not the IDH3B subunit. The IDH3G subunit contains the allosteric site which consists of a CIT-binding site and an ADP-binding site, and the binding of CIT and ADP causes conformational changes at the allosteric site which are transmitted to the active site in the catalytic subunit (IDH3A) through a cascade of conformational changes at the heterodimer interface, leading to stabilization of the isocitrate-binding at the active site and thus activation of the enzyme. ATP can activate the heterotetramer and the heterodimer composed of IDH3A and IDH3G subunits at low concentrations but inhibits their activities at high concentrations, whereas ATP exhibits only inhibitory effect on the heterodimer composed of IDH3A and IDH3B subunits. Catalytic subunit of the enzyme which catalyzes the decarboxylation of isocitrate (ICT) into alpha-ketoglutarate. The heterodimer composed of the alpha (IDH3A) and beta (IDH3B) subunits and the heterodimer composed of the alpha (IDH3A) and gamma (IDH3G) subunits, have considerable basal activity but the full activity of the heterotetramer (containing two subunits of IDH3A, one of IDH3B and one of IDH3G) requires the assembly and cooperative function of both heterodimers. This chain is Isocitrate dehydrogenase [NAD] subunit alpha, mitochondrial, found in Homo sapiens (Human).